A 343-amino-acid chain; its full sequence is Uroporphyrinogen decarboxylase (343 aa).

Residues 21–25 (RQAGR), aspartate 71, tyrosine 148, serine 203, and histidine 316 each bind substrate.

The protein belongs to the uroporphyrinogen decarboxylase family. Homodimer.

The protein localises to the cytoplasm. It carries out the reaction uroporphyrinogen III + 4 H(+) = coproporphyrinogen III + 4 CO2. It functions in the pathway porphyrin-containing compound metabolism; protoporphyrin-IX biosynthesis; coproporphyrinogen-III from 5-aminolevulinate: step 4/4. In terms of biological role, catalyzes the decarboxylation of four acetate groups of uroporphyrinogen-III to yield coproporphyrinogen-III. This Campylobacter fetus subsp. fetus (strain 82-40) protein is Uroporphyrinogen decarboxylase.